Reading from the N-terminus, the 203-residue chain is MKRLGREFYNRDSLIVARELLGKVLVHEIEGQKVSARIVETEAYRGIEDKAAHSYGGKRTPRVEVMYGGPGFSYVFIVYGMHYCFNVVTREEGNPQAVLIRAAEPREGSELMAQNRFKKSYHQLNKSQILGLTNGPGKLCRALSIDKSLNGEDLCGSKLYVAEESQESLSIVTAKRVGIDYAEEAKDYPWRFYLEDSQYVSVK.

It belongs to the DNA glycosylase MPG family.

The sequence is that of Putative 3-methyladenine DNA glycosylase from Desulfitobacterium hafniense (strain Y51).